A 360-amino-acid polypeptide reads, in one-letter code: uncharacterized protein (360 aa).

This is an uncharacterized protein from Escherichia coli (strain UTI89 / UPEC).